We begin with the raw amino-acid sequence, 576 residues long: High-affinity choline transporter 1 (576 aa).

A helical transmembrane segment spans residues 6–26 (GIVAIVFFYVLILVVGIWAGR). Over 27-51 (KSKSSKELESEAGAATEEVMLAGRN) the chain is Cytoplasmic. The helical transmembrane segment at 52-72 (IGTLVGIFTMTATWVGGAYIN) threads the bilayer. The Extracellular portion of the chain corresponds to 73–82 (GTAEALYNGG). The helical transmembrane segment at 83–103 (LLGCQAPVGYAISLVMGGLLF) threads the bilayer. At 104 to 126 (AKKMREEGYITMLDPFQHKYGQR) the chain is on the cytoplasmic side. Residues 127–147 (IGGLMYVPALLGETFWTAAIL) form a helical membrane-spanning segment. The Extracellular portion of the chain corresponds to 148 to 165 (SALGATLSVILGIDMNAS). The helical transmembrane segment at 166–186 (VTLSACIAVFYTFTGGYYAVA) threads the bilayer. Topologically, residues 187–192 (YTDVVQ) are cytoplasmic. A helical membrane pass occupies residues 193-213 (LFCIFVGLWVCVPAAMVHDGA). Over 214-233 (KDISRNAGDWIGEIGGFKET) the chain is Extracellular. The chain crosses the membrane as a helical span at residues 234–254 (SLWIDCMLLLVFGGIPWQVYF). The Cytoplasmic segment spans residues 255 to 270 (QRVLSSKTAHGAQTLS). Residues 271-291 (FVAGVGCILMAIPPALIGAIA) traverse the membrane as a helical segment. Topologically, residues 292–319 (RNTDWRMTDYSPWNNGTKVESIPPDKRN) are extracellular. N-linked (GlcNAc...) asparagine glycosylation occurs at N306. The chain crosses the membrane as a helical span at residues 320–340 (MVVPLVFQYLTPRWVAFIGLG). At 341-378 (AVSAAVMSSADSSVLSAASMFAHNIWKLTIRPHASEKE) the chain is on the cytoplasmic side. A helical membrane pass occupies residues 379 to 399 (VIIVMRIAIICVGIMATIMAL). The Extracellular portion of the chain corresponds to 400–408 (TIQSIYGLW). The chain crosses the membrane as a helical span at residues 409–429 (YLCADLVYVILFPQLLCVVYM). Over 430 to 437 (PRSNTYGS) the chain is Cytoplasmic. Residues 438 to 458 (LAGYAVGLVLRLIGGEPLVSL) traverse the membrane as a helical segment. The Extracellular segment spans residues 459–478 (PAFFHYPMYTDGVQYFPFRT). A helical membrane pass occupies residues 479 to 499 (TAMLSSMATIYIVSIQSEKLF). The Cytoplasmic portion of the chain corresponds to 500–576 (KSGRLSPEWD…DQSYYSTNSN (77 aa)). Positions 541–576 (APNGTPAPVHPNQQPSDENTLLHPYSDQSYYSTNSN) are disordered. Positions 566 to 576 (SDQSYYSTNSN) are enriched in polar residues.

The protein belongs to the sodium:solute symporter (SSF) (TC 2.A.21) family. In terms of tissue distribution, detected in the nervous system, including the nerve ring and cholinergic motor neurons of the ventral nerve cord.

Its subcellular location is the membrane. In terms of biological role, imports choline from the extracellular space to the neuron with high affinity. Choline uptake is the rate-limiting step in acetylcholine synthesis. Sodium ion and chloride ion dependent. The protein is High-affinity choline transporter 1 (cho-1) of Caenorhabditis elegans.